The sequence spans 247 residues: Neurotrophic factor BDNF precursor form (247 aa).

A signal peptide spans Met-1 to Ala-18. Residues Ala-19–Arg-128 constitute a propeptide that is removed on maturation. The N-linked (GlcNAc...) asparagine glycan is linked to Asn-121. Intrachain disulfides connect Cys-141–Cys-208, Cys-186–Cys-237, and Cys-196–Cys-239.

Belongs to the NGF-beta family. In terms of assembly, monomers and homodimers. Binds to NTRK2/TRKB. Can form heterodimers with other neurotrophin family members, such as NTF3 and NTF4 (in vitro), but the physiological relevance of this is not clear. BDNF precursor form: interacts with the heterodimer formed by NGFR and SORCS2. Mature BDNF has much lower affinity for the heterodimer formed by NGFR and SORCS2. Post-translationally, N-glycosylated and glycosulfated, contrary to mature BDNF. In terms of processing, mature BDNF is produced by proteolytic removal of the propeptide, catalyzed by a FURIN family member. In addition, the precursor form is proteolytically cleaved within the propeptide, but this is not an obligatory intermediate for the production of mature BDNF. Can be converted into mature BDNF by plasmin (PLG).

It localises to the secreted. Functionally, important signaling molecule that activates signaling cascades downstream of NTRK2. During development, promotes the survival and differentiation of selected neuronal populations of the peripheral and central nervous systems. Participates in axonal growth, pathfinding and in the modulation of dendritic growth and morphology. Major regulator of synaptic transmission and plasticity at adult synapses in many regions of the CNS. The versatility of BDNF is emphasized by its contribution to a range of adaptive neuronal responses including long-term potentiation (LTP), long-term depression (LTD), certain forms of short-term synaptic plasticity, as well as homeostatic regulation of intrinsic neuronal excitability. Important signaling molecule that activates signaling cascades downstream of NTRK2. Activates signaling cascades via the heterodimeric receptor formed by NGFR and SORCS2. Signaling via NGFR and SORCS2 plays a role in synaptic plasticity and long-term depression (LTD). Binding to NGFR and SORCS2 promotes neuronal apoptosis. Promotes neuronal growth cone collapse. This is Neurotrophic factor BDNF precursor form (BDNF) from Felis catus (Cat).